Consider the following 157-residue polypeptide: uncharacterized protein (157 aa).

This sequence belongs to the MG067/MG068/MG395 family.

This is an uncharacterized protein from Mycoplasma pneumoniae (strain ATCC 29342 / M129 / Subtype 1) (Mycoplasmoides pneumoniae).